The chain runs to 421 residues: C2 calcium-dependent domain-containing protein 4C (421 aa).

4 disordered regions span residues R13 to A97, D119 to S140, H158 to G228, and V250 to V303. Residues E215 to G228 show a composition bias toward polar residues. 3 positions are modified to phosphoserine: S262, S264, and S273. One can recognise a C2 domain in the interval P305 to L421.

It belongs to the C2CD4 family.

The chain is C2 calcium-dependent domain-containing protein 4C (C2CD4C) from Homo sapiens (Human).